The chain runs to 518 residues: MHKDNDSGSGSNPGQVSNYLIVRPHRGGYIDLFRYGVRDDQTSKAKFLEMPDNREWSTITIDEEAEDHRWVIVVSILVRKIIRLLRTPMEFTGFVVDFFLNLFSANGGFFGLLLRLIQAKVVIPERGSVTFVSTIGQLDGRISLYKEWNFVEHLEGIDSVDSGRVKIELGSRGLMDLCVMASKLAYENAKVVENVVDLHWKMNLVEFLDCWNDYQKQMSTQVFVFTDKQKDANLIVISFRGTEPFDADDWGTDFDYSWYEVPNVGKLHMGFLEAMGLGNRDDTTTFHYNLFEQTSSEEENSKKNLLDMVERSAYYAVRVILKRLLSEHENARFVVTGHSLGGALAILFPTLLVLNEETEIMKRLLGVYTFGQPRIGNREVGLFMKAQLNQPVDRYFRVVYCNDIVPRLPYDDKTFLYKHFGLCLFYDSFYNETKAEDEPDPNPYGLRYKILGHVIAVWELVRGLTMGYTHGPDYKEGWFRILFRLMGLVIPGLSDHCMTDYVNSVRLGPDNELQMSSL.

Residues 93-113 (GFVVDFFLNLFSANGGFFGLL) form a helical membrane-spanning segment. A GXSXG motif is present at residues 337-341 (GHSLG). Ser-339 (nucleophile) is an active-site residue. Active-site charge relay system residues include Asp-403 and His-496.

The protein belongs to the AB hydrolase superfamily. Lipase family. In terms of tissue distribution, expressed in pollen grains, pollen tubes, developing embryos, developing seeds and germinating seeds.

It localises to the lipid droplet. Its subcellular location is the membrane. It catalyses the reaction 1,2-di-(9Z-octadecenoyl)-glycerol + (9Z)-octadecenoate + H(+) = 1,2,3-tri-(9Z-octadecenoyl)-glycerol + H2O. The enzyme catalyses 1-(9Z-octadecenoyl)-glycerol + H2O = glycerol + (9Z)-octadecenoate + H(+). Functionally, acid lipase that can hydrolyze a range of triacylglycerols without a clear preference for acyl-chains. Can also cleave 1,2-diacylglycerol, 1,3-diacylglycerol and 1-monoacylglycerol, but not phosphatidylcholine, phosphatidylethanolamine, or sterol esters. Required for pollen tube growth. Triacylglycerol hydrolysis by OBL1 may provide acyl groups for the synthesis of membrane lipids in growing pollen tubes. The protein is Triacylglycerol lipase OBL1 of Arabidopsis thaliana (Mouse-ear cress).